A 519-amino-acid polypeptide reads, in one-letter code: uncharacterized protein (519 aa).

13 helical membrane passes run 19–39 (FSSS…AIAT), 42–62 (VLVS…DWQI), 87–107 (MNIV…TVSG), 128–148 (LLAA…SLAV), 179–199 (VMMP…GLLA), 220–240 (FYAI…FDIA), 270–290 (LILP…YTGA), 311–331 (VGTS…LLII), 345–365 (WIVG…AWTI), 386–406 (IPMQ…AFST), 413–433 (FGIM…ELLL), 475–495 (LPYA…VGFT), and 496–516 (YSGL…IFAV).

The protein localises to the cell membrane. This is an uncharacterized protein from Haemophilus influenzae (strain ATCC 51907 / DSM 11121 / KW20 / Rd).